The primary structure comprises 158 residues: 6,7-dimethyl-8-ribityllumazine synthase (158 aa).

5-amino-6-(D-ribitylamino)uracil is bound by residues F18, 50-52 (SYD), and 74-76 (AVI). Residue 79–80 (ET) participates in (2S)-2-hydroxy-3-oxobutyl phosphate binding. The active-site Proton donor is the H82. L107 lines the 5-amino-6-(D-ribitylamino)uracil pocket. R122 is a binding site for (2S)-2-hydroxy-3-oxobutyl phosphate.

Belongs to the DMRL synthase family.

The catalysed reaction is (2S)-2-hydroxy-3-oxobutyl phosphate + 5-amino-6-(D-ribitylamino)uracil = 6,7-dimethyl-8-(1-D-ribityl)lumazine + phosphate + 2 H2O + H(+). Its pathway is cofactor biosynthesis; riboflavin biosynthesis; riboflavin from 2-hydroxy-3-oxobutyl phosphate and 5-amino-6-(D-ribitylamino)uracil: step 1/2. In terms of biological role, catalyzes the formation of 6,7-dimethyl-8-ribityllumazine by condensation of 5-amino-6-(D-ribitylamino)uracil with 3,4-dihydroxy-2-butanone 4-phosphate. This is the penultimate step in the biosynthesis of riboflavin. The sequence is that of 6,7-dimethyl-8-ribityllumazine synthase from Sulfolobus acidocaldarius (strain ATCC 33909 / DSM 639 / JCM 8929 / NBRC 15157 / NCIMB 11770).